A 285-amino-acid polypeptide reads, in one-letter code: Cell division protein DivIB (285 aa).

Positions 1 to 19 are enriched in basic and acidic residues; it reads MNEKNKNDESKHQEDKLQD. Positions 1–20 are disordered; that stretch reads MNEKNKNDESKHQEDKLQDQ. The Cytoplasmic portion of the chain corresponds to 1-66; it reads MNEKNKNDES…NRFNAMERNS (66 aa). The chain crosses the membrane as a helical span at residues 67–87; that stretch reads IHMIVILSIISLLLILLLSPL. A POTRA domain is found at 88–158; sequence MRFQKVEITG…QVAQIKIEEN (71 aa). Residues 88–285 lie on the Extracellular side of the membrane; sequence MRFQKVEITG…FQVGTYFQQY (198 aa).

This sequence belongs to the FtsQ/DivIB family. DivIB subfamily.

It is found in the cell membrane. In terms of biological role, cell division protein that may be involved in stabilizing or promoting the assembly of the division complex. The sequence is that of Cell division protein DivIB from Weissella koreensis (strain KACC 15510).